The sequence spans 390 residues: UPF0229 protein Cbei_0567 (390 aa).

Residues 77–108 (SGVGNEKRGEKLGNGNKKLAKGNQGAGNEEGD) form a disordered region. The span at 89-103 (GNGNKKLAKGNQGAG) shows a compositional bias: low complexity.

Belongs to the UPF0229 family.

The sequence is that of UPF0229 protein Cbei_0567 from Clostridium beijerinckii (strain ATCC 51743 / NCIMB 8052) (Clostridium acetobutylicum).